Here is a 362-residue protein sequence, read N- to C-terminus: 3-dehydroquinate synthase (362 aa).

NAD(+)-binding positions include 74 to 79, 108 to 112, 132 to 133, Lys145, and Lys154; these read DGEEHK, GVTGD, and TT. Residues Glu187, His250, and His267 each coordinate Zn(2+).

It belongs to the sugar phosphate cyclases superfamily. Dehydroquinate synthase family. The cofactor is Co(2+). Zn(2+) serves as cofactor. Requires NAD(+) as cofactor.

Its subcellular location is the cytoplasm. The enzyme catalyses 7-phospho-2-dehydro-3-deoxy-D-arabino-heptonate = 3-dehydroquinate + phosphate. Its pathway is metabolic intermediate biosynthesis; chorismate biosynthesis; chorismate from D-erythrose 4-phosphate and phosphoenolpyruvate: step 2/7. Its function is as follows. Catalyzes the conversion of 3-deoxy-D-arabino-heptulosonate 7-phosphate (DAHP) to dehydroquinate (DHQ). The protein is 3-dehydroquinate synthase of Syntrophotalea carbinolica (strain DSM 2380 / NBRC 103641 / GraBd1) (Pelobacter carbinolicus).